Reading from the N-terminus, the 167-residue chain is Putative peroxiredoxin-B (167 aa).

Residues 4-167 (IKRGDRFPTT…STAQKIIAKL (164 aa)) form the Thioredoxin domain. Cys-53 serves as the catalytic Cysteine sulfenic acid (-SOH) intermediate. A Microbody targeting signal motif is present at residues 165–167 (AKL).

The protein belongs to the peroxiredoxin family. Prx5 subfamily.

Its subcellular location is the peroxisome membrane. It carries out the reaction a hydroperoxide + [thioredoxin]-dithiol = an alcohol + [thioredoxin]-disulfide + H2O. Its function is as follows. Thiol-specific peroxidase that catalyzes the reduction of hydrogen peroxide and organic hydroperoxides to water and alcohols, respectively. Plays a role in cell protection against oxidative stress by detoxifying peroxides and as sensor of hydrogen peroxide-mediated signaling events. This Candida boidinii (Yeast) protein is Putative peroxiredoxin-B (PMPB).